A 131-amino-acid polypeptide reads, in one-letter code: Small ribosomal subunit protein uS11 (131 aa).

The segment covering 1 to 15 (MAAQKVKKTRRRKER) has biased composition (basic residues). The segment at 1–23 (MAAQKVKKTRRRKERKNVEHGAA) is disordered.

The protein belongs to the universal ribosomal protein uS11 family. In terms of assembly, part of the 30S ribosomal subunit. Interacts with proteins S7 and S18. Binds to IF-3.

Its function is as follows. Located on the platform of the 30S subunit, it bridges several disparate RNA helices of the 16S rRNA. Forms part of the Shine-Dalgarno cleft in the 70S ribosome. The polypeptide is Small ribosomal subunit protein uS11 (Clostridium perfringens (strain 13 / Type A)).